A 273-amino-acid chain; its full sequence is Diaminopimelate epimerase (273 aa).

The substrate site is built by Asn11 and Asn60. Cys69 serves as the catalytic Proton donor. Residues 70-71, Asn181, and 199-200 each bind substrate; these read GN and ER. The active-site Proton acceptor is the Cys209. 210-211 is a binding site for substrate; sequence GT.

Belongs to the diaminopimelate epimerase family. As to quaternary structure, homodimer.

It is found in the cytoplasm. It catalyses the reaction (2S,6S)-2,6-diaminopimelate = meso-2,6-diaminopimelate. It functions in the pathway amino-acid biosynthesis; L-lysine biosynthesis via DAP pathway; DL-2,6-diaminopimelate from LL-2,6-diaminopimelate: step 1/1. Functionally, catalyzes the stereoinversion of LL-2,6-diaminopimelate (L,L-DAP) to meso-diaminopimelate (meso-DAP), a precursor of L-lysine and an essential component of the bacterial peptidoglycan. This chain is Diaminopimelate epimerase, found in Helicobacter pylori (strain ATCC 700392 / 26695) (Campylobacter pylori).